We begin with the raw amino-acid sequence, 411 residues long: Solute carrier RCH1 (411 aa).

Residues 1–17 (MSLETFRESKAYKWTSK) lie on the Cytoplasmic side of the membrane. A helical membrane pass occupies residues 18–38 (VISFLIGQWFFIFLGVFIALA). The Extracellular portion of the chain corresponds to 39–52 (HSYPEFAKQGGTIR). A helical membrane pass occupies residues 53-73 (AEYSIGYGAVAVIFLISGLSM). Topologically, residues 74–89 (STKQLLVNVANWRAHF) are cytoplasmic. The chain crosses the membrane as a helical span at residues 90–110 (TVLSMSFLVTSAIIYGIASGI). The Extracellular portion of the chain corresponds to 111–120 (KASHNGQIDD). Residues 121 to 141 (WLLIGLIVTHACPTTVSSNVV) traverse the membrane as a helical segment. At 142–150 (MTKQAHGND) the chain is on the cytoplasmic side. A helical membrane pass occupies residues 151–171 (ILTLCEVFIGNVLGAFITPAL). The Extracellular segment spans residues 172-204 (LQMYMRGTWEIGNPSHQTQGDSTVQELYAHTMK). Residues 205-225 (QLGLSVFVPLFVGQVVQNIFP) form a helical membrane-spanning segment. Residues 226 to 242 (KQTKWCLTTFKLNKVGS) lie on the Cytoplasmic side of the membrane. A helical membrane pass occupies residues 243-263 (FMLLLIMFQSFSTAFAQHAFT). Topologically, residues 264-269 (SVSHAS) are extracellular. A helical transmembrane segment spans residues 270-290 (IIFLVFFNIGIYLFFTVLTFF). Residues 291–329 (YSRPFWILRVFKEEPNESSSKLYRYSYAFFRPFYYNRKD) lie on the Cytoplasmic side of the membrane. A helical transmembrane segment spans residues 330-350 (TVAVMLCGPAKTAALGVSLVS). The Extracellular portion of the chain corresponds to 351-361 (SQYGSHNPKLG). Residues 362 to 382 (IILVPLVLYQAEQVMTANVLV) form a helical membrane-spanning segment. At 383-411 (SFMRKWIHAEDKVPEDEETSVGSDNDPKK) the chain is on the cytoplasmic side.

It belongs to the bile acid:sodium symporter (BASS) (TC 2.A.28) family.

The protein localises to the cell membrane. It is found in the bud neck. Functionally, solute carrier protein that negatively regulates the cytosolic homeostasis in response to high levels of extracellular calcium. This Candida albicans (strain SC5314 / ATCC MYA-2876) (Yeast) protein is Solute carrier RCH1.